We begin with the raw amino-acid sequence, 299 residues long: Porphobilinogen deaminase (299 aa).

Cys-242 carries the post-translational modification S-(dipyrrolylmethanemethyl)cysteine.

It belongs to the HMBS family. As to quaternary structure, monomer. Dipyrromethane is required as a cofactor.

It carries out the reaction 4 porphobilinogen + H2O = hydroxymethylbilane + 4 NH4(+). It functions in the pathway porphyrin-containing compound metabolism; protoporphyrin-IX biosynthesis; coproporphyrinogen-III from 5-aminolevulinate: step 2/4. Tetrapolymerization of the monopyrrole PBG into the hydroxymethylbilane pre-uroporphyrinogen in several discrete steps. The chain is Porphobilinogen deaminase (hemC) from Rickettsia prowazekii (strain Madrid E).